The chain runs to 173 residues: Ribosome maturation factor RimM (173 aa).

The PRC barrel domain maps to 95-169 (EGSYYFKDIL…RIEVTLLEGL (75 aa)).

The protein belongs to the RimM family. In terms of assembly, binds ribosomal protein uS19.

It is found in the cytoplasm. An accessory protein needed during the final step in the assembly of 30S ribosomal subunit, possibly for assembly of the head region. Essential for efficient processing of 16S rRNA. May be needed both before and after RbfA during the maturation of 16S rRNA. It has affinity for free ribosomal 30S subunits but not for 70S ribosomes. This is Ribosome maturation factor RimM from Lactobacillus gasseri (strain ATCC 33323 / DSM 20243 / BCRC 14619 / CIP 102991 / JCM 1131 / KCTC 3163 / NCIMB 11718 / NCTC 13722 / AM63).